A 374-amino-acid polypeptide reads, in one-letter code: Carnitine monooxygenase oxygenase subunit (374 aa).

Residues 47–155 (WICVAHSSEL…LEEYAGFVFI (109 aa)) enclose the Rieske domain. Residues C89, H91, C109, and H112 each contribute to the [2Fe-2S] cluster site. Residues H211, H216, and D325 each contribute to the Fe cation site.

This sequence belongs to the bacterial ring-hydroxylating dioxygenase alpha subunit family. CntA subfamily. Composed of an oxygenase subunit and a reductase subunit. Requires [2Fe-2S] cluster as cofactor. Fe cation serves as cofactor.

It catalyses the reaction (R)-carnitine + NADH + O2 + H(+) = (3R)-3-hydroxy-4-oxobutanoate + trimethylamine + NAD(+) + H2O. It carries out the reaction (R)-carnitine + NADPH + O2 + H(+) = (3R)-3-hydroxy-4-oxobutanoate + trimethylamine + NADP(+) + H2O. It functions in the pathway amine and polyamine metabolism; carnitine metabolism. Converts carnitine to trimethylamine and malic semialdehyde. This Escherichia coli O157:H7 protein is Carnitine monooxygenase oxygenase subunit (yeaW).